Consider the following 321-residue polypeptide: Olfactory receptor 52P1 (321 aa).

Over 1–27 (MESPNHTDVDPSVFFLLGIPGLEQFHL) the chain is Extracellular. Asn5 is a glycosylation site (N-linked (GlcNAc...) asparagine). The helical transmembrane segment at 28–48 (WLSLPVCGLGTATIVGNITIL) threads the bilayer. The Cytoplasmic portion of the chain corresponds to 49–56 (VVVATEPV). Residues 57–77 (LHKPVYLFLCMLSTIDLAASV) traverse the membrane as a helical segment. Over 78 to 101 (STVPKLLAIFWCGAGHISASACLA) the chain is Extracellular. Cys99 and Cys191 are oxidised to a cystine. A helical transmembrane segment spans residues 102-122 (QMFFIHAFCMMESTVLLAMAF). The Cytoplasmic portion of the chain corresponds to 123–141 (DRYVAICHPLRYATILTDT). A helical transmembrane segment spans residues 142–162 (IIAHIGVAAVVRGSLLMLPCP). The Extracellular segment spans residues 163–198 (FLIGRLNFCQSHVILHTYCEHMAVVKLACGDTRPNR). Residues 199–219 (VYGLTAALLVIGVDLFCIGLS) form a helical membrane-spanning segment. Residues 220-239 (YALSAQAVLRLSSHEARSKA) are Cytoplasmic-facing. Residues 240 to 260 (LGTCGSHVCVILISYTPALFS) traverse the membrane as a helical segment. The Extracellular segment spans residues 261 to 275 (FFTHRFGHHVPVHIH). Residues 276 to 296 (ILLANVYLLLPPALNPVVYGV) traverse the membrane as a helical segment. Topologically, residues 297 to 315 (KTKQIRKRVVRVFQSGQGM) are cytoplasmic.

The protein belongs to the G-protein coupled receptor 1 family.

Its subcellular location is the cell membrane. Odorant receptor. The polypeptide is Olfactory receptor 52P1 (Homo sapiens (Human)).